Reading from the N-terminus, the 398-residue chain is Enolase (398 aa).

A (2R)-2-phosphoglycerate-binding site is contributed by glutamine 154. Glutamate 196 acts as the Proton donor in catalysis. Positions 232, 273, and 300 each coordinate Mg(2+). (2R)-2-phosphoglycerate contacts are provided by lysine 325, arginine 354, serine 355, and lysine 376. Lysine 325 acts as the Proton acceptor in catalysis.

The protein belongs to the enolase family. Mg(2+) is required as a cofactor.

It localises to the cytoplasm. It is found in the secreted. Its subcellular location is the cell surface. The enzyme catalyses (2R)-2-phosphoglycerate = phosphoenolpyruvate + H2O. The protein operates within carbohydrate degradation; glycolysis; pyruvate from D-glyceraldehyde 3-phosphate: step 4/5. In terms of biological role, catalyzes the reversible conversion of 2-phosphoglycerate (2-PG) into phosphoenolpyruvate (PEP). It is essential for the degradation of carbohydrates via glycolysis. This is Enolase from Natronomonas pharaonis (strain ATCC 35678 / DSM 2160 / CIP 103997 / JCM 8858 / NBRC 14720 / NCIMB 2260 / Gabara) (Halobacterium pharaonis).